The primary structure comprises 108 residues: ATP synthase peripheral stalk subunit F6, mitochondrial (108 aa).

The transit peptide at 1–32 directs the protein to the mitochondrion; sequence MILQRLFRFSSIIRSAVSVHFRRNIGVTAVAF. An N6-acetyllysine mark is found at Lys41, Lys46, and Lys79. N6-acetyllysine; alternate occurs at positions 84, 94, and 99. N6-succinyllysine; alternate occurs at positions 84, 94, and 99. Position 105 is an N6-acetyllysine (Lys105).

The protein belongs to the eukaryotic ATPase subunit F6 family. Component of the ATP synthase complex composed at least of ATP5F1A/subunit alpha, ATP5F1B/subunit beta, ATP5MC1/subunit c (homooctomer), MT-ATP6/subunit a, MT-ATP8/subunit 8, ATP5ME/subunit e, ATP5MF/subunit f, ATP5MG/subunit g, ATP5MK/subunit k, ATP5MJ/subunit j, ATP5F1C/subunit gamma, ATP5F1D/subunit delta, ATP5F1E/subunit epsilon, ATP5PF/subunit F6, ATP5PB/subunit b, ATP5PD/subunit d, ATP5PO/subunit OSCP. ATP synthase complex consists of a soluble F(1) head domain (subunits alpha(3) and beta(3)) - the catalytic core - and a membrane F(0) domain - the membrane proton channel (subunits c, a, 8, e, f, g, k and j). These two domains are linked by a central stalk (subunits gamma, delta, and epsilon) rotating inside the F1 region and a stationary peripheral stalk (subunits F6, b, d, and OSCP).

It is found in the mitochondrion. The protein localises to the mitochondrion inner membrane. In terms of biological role, subunit F6, of the mitochondrial membrane ATP synthase complex (F(1)F(0) ATP synthase or Complex V) that produces ATP from ADP in the presence of a proton gradient across the membrane which is generated by electron transport complexes of the respiratory chain. ATP synthase complex consist of a soluble F(1) head domain - the catalytic core - and a membrane F(1) domain - the membrane proton channel. These two domains are linked by a central stalk rotating inside the F(1) region and a stationary peripheral stalk. During catalysis, ATP synthesis in the catalytic domain of F(1) is coupled via a rotary mechanism of the central stalk subunits to proton translocation. In vivo, can only synthesize ATP although its ATP hydrolase activity can be activated artificially in vitro. Part of the complex F(0) domain. Part of the complex F(0) domain and the peripheric stalk, which acts as a stator to hold the catalytic alpha(3)beta(3) subcomplex and subunit a/ATP6 static relative to the rotary elements. The chain is ATP synthase peripheral stalk subunit F6, mitochondrial from Macaca fascicularis (Crab-eating macaque).